The following is a 689-amino-acid chain: UvrABC system protein B (689 aa).

The interval M1–D26 is disordered. Residues A40 to E422 form the Helicase ATP-binding domain. G53–T60 is an ATP binding site. The Beta-hairpin motif lies at Y106–I129. In terms of domain architecture, Helicase C-terminal spans Q443–V605. Residues A632 to A667 enclose the UVR domain. Residues F668–W689 are disordered.

The protein belongs to the UvrB family. Forms a heterotetramer with UvrA during the search for lesions. Interacts with UvrC in an incision complex.

The protein localises to the cytoplasm. Functionally, the UvrABC repair system catalyzes the recognition and processing of DNA lesions. A damage recognition complex composed of 2 UvrA and 2 UvrB subunits scans DNA for abnormalities. Upon binding of the UvrA(2)B(2) complex to a putative damaged site, the DNA wraps around one UvrB monomer. DNA wrap is dependent on ATP binding by UvrB and probably causes local melting of the DNA helix, facilitating insertion of UvrB beta-hairpin between the DNA strands. Then UvrB probes one DNA strand for the presence of a lesion. If a lesion is found the UvrA subunits dissociate and the UvrB-DNA preincision complex is formed. This complex is subsequently bound by UvrC and the second UvrB is released. If no lesion is found, the DNA wraps around the other UvrB subunit that will check the other stand for damage. In Halobacterium salinarum (strain ATCC 700922 / JCM 11081 / NRC-1) (Halobacterium halobium), this protein is UvrABC system protein B.